The following is a 239-amino-acid chain: Ribosomal RNA small subunit methyltransferase G (239 aa).

Residues glycine 78, phenylalanine 83, 129–130 (AE), and arginine 148 contribute to the S-adenosyl-L-methionine site.

This sequence belongs to the methyltransferase superfamily. RNA methyltransferase RsmG family.

It is found in the cytoplasm. Functionally, specifically methylates the N7 position of a guanine in 16S rRNA. In Alkaliphilus oremlandii (strain OhILAs) (Clostridium oremlandii (strain OhILAs)), this protein is Ribosomal RNA small subunit methyltransferase G.